A 1249-amino-acid polypeptide reads, in one-letter code: DNA-directed RNA polymerase subunit beta (1249 aa).

The protein belongs to the RNA polymerase beta chain family. In terms of assembly, the RNAP catalytic core consists of 2 alpha, 1 beta, 1 beta' and 1 omega subunit. When a sigma factor is associated with the core the holoenzyme is formed, which can initiate transcription.

The enzyme catalyses RNA(n) + a ribonucleoside 5'-triphosphate = RNA(n+1) + diphosphate. Functionally, DNA-dependent RNA polymerase catalyzes the transcription of DNA into RNA using the four ribonucleoside triphosphates as substrates. This is DNA-directed RNA polymerase subunit beta from Clostridium botulinum (strain Eklund 17B / Type B).